Here is a 302-residue protein sequence, read N- to C-terminus: Protein FdhE homolog (302 aa).

Belongs to the FdhE family.

Its subcellular location is the cytoplasm. In terms of biological role, necessary for formate dehydrogenase activity. This chain is Protein FdhE homolog, found in Shewanella oneidensis (strain ATCC 700550 / JCM 31522 / CIP 106686 / LMG 19005 / NCIMB 14063 / MR-1).